A 484-amino-acid polypeptide reads, in one-letter code: uncharacterized protein (484 aa).

The next 12 membrane-spanning stretches (helical) occupy residues 19-39 (LSFG…MIFV), 78-98 (VNWG…WLIV), 111-131 (FFML…FIIL), 134-154 (IFAI…SNYL), 165-185 (FSPF…AGII), 199-219 (IVFL…IILG), 249-269 (TWYW…PFTF), 289-309 (ISVF…TIGL), 321-341 (ISTI…VFVL), 360-380 (LFLF…GVML), 398-418 (FGLI…ITSL), and 440-460 (LGAY…LALL).

It is found in the cell membrane. This is an uncharacterized protein from Mesomycoplasma hyopneumoniae (strain 232) (Mycoplasma hyopneumoniae).